The sequence spans 325 residues: Exogastrula-inducing polypeptide (325 aa).

Residues 1 to 19 (MKVSLVLLIAVFGLAMVAA) form the signal peptide. Residues 20–45 (EETLESKLQMALKSLLQENEELNLEG) constitute a propeptide that is removed on maturation. EGF-like domains are found at residues 48–91 (TKGG…SSCY) and 107–154 (TVAR…GGCS). 6 cysteine pairs are disulfide-bonded: Cys52–Cys65, Cys59–Cys75, Cys77–Cys90, Cys111–Cys124, Cys118–Cys138, and Cys140–Cys153. A propeptide spanning residues 160 to 177 (ELEYLSYVARDVEMEMLA) is cleaved from the precursor. In terms of domain architecture, EGF-like 3 spans 180–226 (SVYQCNRDTNSCDGFGKCEKSTFGRTTGQYICNCDDGYRNNAYGGCS). 3 disulfide bridges follow: Cys184–Cys197, Cys191–Cys211, and Cys213–Cys225. Positions 232–249 (EIEYLSMIARDQELEMQA) are excised as a propeptide. One can recognise an EGF-like 4 domain in the interval 252 to 298 (SLPQCNRDTNYCDGFGQCVKSTFGRTTGQYICSCNDGYENNLYGGCS). 3 disulfides stabilise this stretch: Cys256–Cys269, Cys263–Cys283, and Cys285–Cys297. The propeptide occupies 313-325 (MEILRSLANLLEE).

It localises to the secreted. Its subcellular location is the extracellular space. The protein localises to the extracellular matrix. Its function is as follows. The EGIP peptides are factors effective to extrude the archenteron toward outside of embryos. May have a role in the induction of gastrulation. This chain is Exogastrula-inducing polypeptide, found in Heliocidaris crassispina (Sea urchin).